A 342-amino-acid polypeptide reads, in one-letter code: uncharacterized protein (342 aa).

Helical transmembrane passes span 35 to 55 (YFRVSLVLLTLLIISLVWCFS), 134 to 154 (LLFLPSSVLSLSLIFSLIIYF), and 161 to 180 (LFITRCNSTLYLFNIYYCFS). 2 disordered regions span residues 198-220 (SSDNYSNYQQQPQQQPQQQQQYN) and 311-342 (IINNNNNNNNNNNINNSAYSNFNNSNGYNYTN).

Its subcellular location is the membrane. This is an uncharacterized protein from Dictyostelium discoideum (Social amoeba).